The sequence spans 280 residues: UPF0328 protein ECU06_0020/ECU06_1700 (280 aa).

The protein belongs to the UPF0328 family.

This chain is UPF0328 protein ECU06_0020/ECU06_1700, found in Encephalitozoon cuniculi (strain GB-M1) (Microsporidian parasite).